A 336-amino-acid polypeptide reads, in one-letter code: Methionine synthase (336 aa).

Positions 210, 212, 234, and 294 each coordinate Zn(2+).

It belongs to the archaeal MetE family. Zn(2+) is required as a cofactor.

It functions in the pathway amino-acid biosynthesis; L-methionine biosynthesis via de novo pathway. Its function is as follows. Catalyzes the transfer of a methyl group to L-homocysteine resulting in methionine formation. The physiological methyl donor is unknown. The protein is Methionine synthase of Thermococcus kodakarensis (strain ATCC BAA-918 / JCM 12380 / KOD1) (Pyrococcus kodakaraensis (strain KOD1)).